The sequence spans 78 residues: Large ribosomal subunit protein bL28 (78 aa).

The protein belongs to the bacterial ribosomal protein bL28 family.

The protein is Large ribosomal subunit protein bL28 of Francisella tularensis subsp. holarctica (strain FTNF002-00 / FTA).